Consider the following 513-residue polypeptide: Sugar transport protein 7 (513 aa).

Over 1–26 (MAGGSFGPTGVAKERAEQYQGKVTSY) the chain is Cytoplasmic. The next 12 helical transmembrane spans lie at 27–47 (VIIA…DIGI), 84–104 (GLAA…LVAS), 121–141 (ISFL…MLLA), 144–164 (IMLG…LSEV), 171–191 (GGLN…ANMV), 205–225 (LSLG…YFLP), 286–306 (LVMA…SILF), 324–344 (YSSA…IGLV), 351–371 (ALLI…AVIL), 387–407 (VIVV…WGPL), 427–447 (ITVA…LGLL), and 452–472 (FGIF…VYFL). The Cytoplasmic segment spans residues 473 to 513 (LPETKGVPIEEMTLLWSKHWFWKKVLPDATNLEDESKNVSV).

The protein belongs to the major facilitator superfamily. Sugar transporter (TC 2.A.1.1) family.

It is found in the cell membrane. In terms of biological role, mediates an active uptake of hexoses, probably by sugar/hydrogen symport. This Arabidopsis thaliana (Mouse-ear cress) protein is Sugar transport protein 7 (STP7).